The following is a 589-amino-acid chain: Glucose starvation modulator protein 1 (589 aa).

The segment at residues 20–48 is a DNA-binding region (zn(2)-C6 fungal-type); sequence CVFCHQKHLQCSNERPCKNCVKRNIGHEC. Disordered regions lie at residues 59–90, 218–240, and 340–362; these read LTGN…PSVA, NNSN…NPEP, and ANGQ…PGNG. Positions 80–90 are enriched in polar residues; that stretch reads TPITASSPSVA. Positions 347 to 357 are enriched in basic and acidic residues; the sequence is LLDHNKDDSRK. Positions 471–542 constitute a PAS domain; that stretch reads SLLDYKKLVE…FKFFKNIAVN (72 aa).

This sequence belongs to the ERT1/acuK family.

It is found in the nucleus. Its function is as follows. Transcription factor which regulates nonfermentable carbon utilization. The polypeptide is Glucose starvation modulator protein 1 (GSM1) (Candida tropicalis (strain ATCC MYA-3404 / T1) (Yeast)).